The chain runs to 130 residues: Gonadotropin subunit beta-1 (130 aa).

An N-terminal signal peptide occupies residues 1–18 (MRMHFVVMVMLLPALMMA). Intrachain disulfides connect C26-C74, C40-C89, C51-C105, C55-C107, and C110-C117. An N-linked (GlcNAc...) asparagine glycan is attached at N30.

Belongs to the glycoprotein hormones subunit beta family. In terms of assembly, heterodimer of an alpha and a beta chain.

The protein localises to the secreted. Its function is as follows. Involved in gametogenesis and steroidogenesis. The protein is Gonadotropin subunit beta-1 (cgba) of Cyprinus carpio (Common carp).